The chain runs to 65 residues: Large ribosomal subunit protein bL35 (65 aa).

Belongs to the bacterial ribosomal protein bL35 family.

This chain is Large ribosomal subunit protein bL35, found in Prochlorococcus marinus (strain MIT 9301).